The sequence spans 228 residues: 2,3-bisphosphoglycerate-dependent phosphoglycerate mutase (228 aa).

Substrate contacts are provided by residues 8 to 15 (RHGQSVWN), 21 to 22 (TG), R60, 87 to 90 (ERHY), K98, 114 to 115 (RR), and 183 to 184 (GN). H9 (tele-phosphohistidine intermediate) is an active-site residue. The active-site Proton donor/acceptor is the E87.

It belongs to the phosphoglycerate mutase family. BPG-dependent PGAM subfamily.

The catalysed reaction is (2R)-2-phosphoglycerate = (2R)-3-phosphoglycerate. The protein operates within carbohydrate degradation; glycolysis; pyruvate from D-glyceraldehyde 3-phosphate: step 3/5. Its function is as follows. Catalyzes the interconversion of 2-phosphoglycerate and 3-phosphoglycerate. This chain is 2,3-bisphosphoglycerate-dependent phosphoglycerate mutase, found in Staphylococcus carnosus (strain TM300).